The chain runs to 277 residues: Putative pyruvate, phosphate dikinase regulatory protein (277 aa).

156–163 (GVSRTSKT) is a binding site for ADP.

It belongs to the pyruvate, phosphate/water dikinase regulatory protein family. PDRP subfamily.

It carries out the reaction N(tele)-phospho-L-histidyl/L-threonyl-[pyruvate, phosphate dikinase] + ADP = N(tele)-phospho-L-histidyl/O-phospho-L-threonyl-[pyruvate, phosphate dikinase] + AMP + H(+). The catalysed reaction is N(tele)-phospho-L-histidyl/O-phospho-L-threonyl-[pyruvate, phosphate dikinase] + phosphate + H(+) = N(tele)-phospho-L-histidyl/L-threonyl-[pyruvate, phosphate dikinase] + diphosphate. Bifunctional serine/threonine kinase and phosphorylase involved in the regulation of the pyruvate, phosphate dikinase (PPDK) by catalyzing its phosphorylation/dephosphorylation. This chain is Putative pyruvate, phosphate dikinase regulatory protein, found in Carboxydothermus hydrogenoformans (strain ATCC BAA-161 / DSM 6008 / Z-2901).